The primary structure comprises 551 residues: Glucans biosynthesis protein D (551 aa).

The tat-type signal signal peptide spans Met1 to Ala32.

This sequence belongs to the OpgD/OpgG family. Post-translationally, predicted to be exported by the Tat system. The position of the signal peptide cleavage has not been experimentally proven.

The protein localises to the periplasm. The protein operates within glycan metabolism; osmoregulated periplasmic glucan (OPG) biosynthesis. In terms of biological role, probably involved in the control of the structural glucose backbone of osmoregulated periplasmic glucans (OPGs). This Escherichia coli (strain K12 / MC4100 / BW2952) protein is Glucans biosynthesis protein D.